We begin with the raw amino-acid sequence, 264 residues long: Orotidine 5'-phosphate decarboxylase (264 aa).

Residues Asp37, 59–61, 91–100, Tyr217, and Arg235 each bind substrate; these read KTH and DRKFADIGNT. Residue Lys93 is the Proton donor of the active site.

Belongs to the OMP decarboxylase family.

It carries out the reaction orotidine 5'-phosphate + H(+) = UMP + CO2. The protein operates within pyrimidine metabolism; UMP biosynthesis via de novo pathway; UMP from orotate: step 2/2. The protein is Orotidine 5'-phosphate decarboxylase (URA3) of Torulaspora delbrueckii (Yeast).